The primary structure comprises 154 residues: Iron-sulfur cluster assembly 2 homolog, mitochondrial (154 aa).

Residues 1-8 (MAASRALS) constitute a mitochondrion transit peptide. Residues C79, C144, and C146 each contribute to the Fe cation site.

It belongs to the HesB/IscA family. Heterotetramer; forms a dimer of dimers with IBA57. Interacts with [2Fe-2S]-ISCA2 forming the heterodimer [2Fe- 2S]-ISCA2-IBA57 complex; [2Fe-2S] cluster binding is absolutely required to promote the complex formation.

The protein localises to the mitochondrion. In terms of biological role, involved in the maturation of mitochondrial 4Fe-4S proteins functioning late in the iron-sulfur cluster assembly pathway. May be involved in the binding of an intermediate of Fe/S cluster assembly. This is Iron-sulfur cluster assembly 2 homolog, mitochondrial (Isca2) from Mus musculus (Mouse).